Consider the following 271-residue polypeptide: Type III pantothenate kinase (271 aa).

6-13 (DVRNTNIV) provides a ligand contact to ATP. Position 109–112 (109–112 (GADR)) interacts with substrate. Aspartate 111 (proton acceptor) is an active-site residue. Position 131 (aspartate 131) interacts with K(+). Threonine 134 contacts ATP. Residue threonine 186 coordinates substrate.

It belongs to the type III pantothenate kinase family. Homodimer. NH4(+) is required as a cofactor. The cofactor is K(+).

Its subcellular location is the cytoplasm. The enzyme catalyses (R)-pantothenate + ATP = (R)-4'-phosphopantothenate + ADP + H(+). The protein operates within cofactor biosynthesis; coenzyme A biosynthesis; CoA from (R)-pantothenate: step 1/5. Its function is as follows. Catalyzes the phosphorylation of pantothenate (Pan), the first step in CoA biosynthesis. This Rhodococcus jostii (strain RHA1) protein is Type III pantothenate kinase.